The primary structure comprises 316 residues: ATP synthase gamma chain (316 aa).

Belongs to the ATPase gamma chain family. F-type ATPases have 2 components, CF(1) - the catalytic core - and CF(0) - the membrane proton channel. CF(1) has five subunits: alpha(3), beta(3), gamma(1), delta(1), epsilon(1). CF(0) has three main subunits: a, b and c.

The protein resides in the cellular thylakoid membrane. In terms of biological role, produces ATP from ADP in the presence of a proton gradient across the membrane. The gamma chain is believed to be important in regulating ATPase activity and the flow of protons through the CF(0) complex. This chain is ATP synthase gamma chain, found in Prochlorococcus marinus (strain AS9601).